Consider the following 486-residue polypeptide: Glutamyl-tRNA(Gln) amidotransferase subunit A (486 aa).

Residues K79 and S154 each act as charge relay system in the active site. S178 serves as the catalytic Acyl-ester intermediate.

Belongs to the amidase family. GatA subfamily. In terms of assembly, heterotrimer of A, B and C subunits.

The catalysed reaction is L-glutamyl-tRNA(Gln) + L-glutamine + ATP + H2O = L-glutaminyl-tRNA(Gln) + L-glutamate + ADP + phosphate + H(+). In terms of biological role, allows the formation of correctly charged Gln-tRNA(Gln) through the transamidation of misacylated Glu-tRNA(Gln) in organisms which lack glutaminyl-tRNA synthetase. The reaction takes place in the presence of glutamine and ATP through an activated gamma-phospho-Glu-tRNA(Gln). In Dehalococcoides mccartyi (strain ATCC BAA-2100 / JCM 16839 / KCTC 5957 / BAV1), this protein is Glutamyl-tRNA(Gln) amidotransferase subunit A.